The chain runs to 257 residues: Deoxyribose-phosphate aldolase (257 aa).

The active-site Proton donor/acceptor is the aspartate 102. Lysine 166 acts as the Schiff-base intermediate with acetaldehyde in catalysis. The Proton donor/acceptor role is filled by lysine 198.

The protein belongs to the DeoC/FbaB aldolase family. DeoC type 2 subfamily.

The protein localises to the cytoplasm. It catalyses the reaction 2-deoxy-D-ribose 5-phosphate = D-glyceraldehyde 3-phosphate + acetaldehyde. The protein operates within carbohydrate degradation; 2-deoxy-D-ribose 1-phosphate degradation; D-glyceraldehyde 3-phosphate and acetaldehyde from 2-deoxy-alpha-D-ribose 1-phosphate: step 2/2. Its function is as follows. Catalyzes a reversible aldol reaction between acetaldehyde and D-glyceraldehyde 3-phosphate to generate 2-deoxy-D-ribose 5-phosphate. This chain is Deoxyribose-phosphate aldolase, found in Shewanella loihica (strain ATCC BAA-1088 / PV-4).